Reading from the N-terminus, the 431-residue chain is CCA-adding enzyme (431 aa).

2 residues coordinate ATP: Ser-50 and Lys-53. Ser-50 and Lys-53 together coordinate CTP. 3 residues coordinate Mg(2+): Asp-61, Asp-63, and Asp-112. Residues His-135, Lys-155, and Tyr-164 each contribute to the ATP site. Residues His-135, Lys-155, and Tyr-164 each contribute to the CTP site.

It belongs to the tRNA nucleotidyltransferase/poly(A) polymerase family. Archaeal CCA-adding enzyme subfamily. Homodimer. The cofactor is Mg(2+).

The catalysed reaction is a tRNA precursor + 2 CTP + ATP = a tRNA with a 3' CCA end + 3 diphosphate. The enzyme catalyses a tRNA with a 3' CCA end + 2 CTP + ATP = a tRNA with a 3' CCACCA end + 3 diphosphate. In terms of biological role, catalyzes the addition and repair of the essential 3'-terminal CCA sequence in tRNAs without using a nucleic acid template. Adds these three nucleotides in the order of C, C, and A to the tRNA nucleotide-73, using CTP and ATP as substrates and producing inorganic pyrophosphate. tRNA 3'-terminal CCA addition is required both for tRNA processing and repair. Also involved in tRNA surveillance by mediating tandem CCA addition to generate a CCACCA at the 3' terminus of unstable tRNAs. While stable tRNAs receive only 3'-terminal CCA, unstable tRNAs are marked with CCACCA and rapidly degraded. This chain is CCA-adding enzyme, found in Thermoplasma acidophilum (strain ATCC 25905 / DSM 1728 / JCM 9062 / NBRC 15155 / AMRC-C165).